A 312-amino-acid polypeptide reads, in one-letter code: DNA primase small subunit PriS (312 aa).

Active-site residues include aspartate 88, aspartate 90, and aspartate 215.

This sequence belongs to the eukaryotic-type primase small subunit family. As to quaternary structure, heterodimer of a small subunit (PriS) and a large subunit (PriL). Mg(2+) is required as a cofactor. Requires Mn(2+) as cofactor.

In terms of biological role, catalytic subunit of DNA primase, an RNA polymerase that catalyzes the synthesis of short RNA molecules used as primers for DNA polymerase during DNA replication. The small subunit contains the primase catalytic core and has DNA synthesis activity on its own. Binding to the large subunit stabilizes and modulates the activity, increasing the rate of DNA synthesis while decreasing the length of the DNA fragments, and conferring RNA synthesis capability. The DNA polymerase activity may enable DNA primase to also catalyze primer extension after primer synthesis. May also play a role in DNA repair. The chain is DNA primase small subunit PriS from Pyrobaculum islandicum (strain DSM 4184 / JCM 9189 / GEO3).